Here is a 475-residue protein sequence, read N- to C-terminus: Aspartyl/glutamyl-tRNA(Asn/Gln) amidotransferase subunit B (475 aa).

It belongs to the GatB/GatE family. GatB subfamily. Heterotrimer of A, B and C subunits.

It catalyses the reaction L-glutamyl-tRNA(Gln) + L-glutamine + ATP + H2O = L-glutaminyl-tRNA(Gln) + L-glutamate + ADP + phosphate + H(+). The enzyme catalyses L-aspartyl-tRNA(Asn) + L-glutamine + ATP + H2O = L-asparaginyl-tRNA(Asn) + L-glutamate + ADP + phosphate + 2 H(+). In terms of biological role, allows the formation of correctly charged Asn-tRNA(Asn) or Gln-tRNA(Gln) through the transamidation of misacylated Asp-tRNA(Asn) or Glu-tRNA(Gln) in organisms which lack either or both of asparaginyl-tRNA or glutaminyl-tRNA synthetases. The reaction takes place in the presence of glutamine and ATP through an activated phospho-Asp-tRNA(Asn) or phospho-Glu-tRNA(Gln). This is Aspartyl/glutamyl-tRNA(Asn/Gln) amidotransferase subunit B from Bacillus cereus (strain G9842).